Reading from the N-terminus, the 135-residue chain is Large ribosomal subunit protein uL16c (135 aa).

Belongs to the universal ribosomal protein uL16 family. Part of the 50S ribosomal subunit.

The protein localises to the plastid. The protein resides in the chloroplast. The polypeptide is Large ribosomal subunit protein uL16c (Gossypium hirsutum (Upland cotton)).